The primary structure comprises 714 residues: ATP-dependent DNA helicase DinG (714 aa).

Residues 17–294 enclose the Helicase ATP-binding domain; the sequence is ALQDQIPDFI…TCMEQFRPKT (278 aa). 54–61 provides a ligand contact to ATP; the sequence is APTGVGKT. Residues Cys-120, Cys-194, Cys-199, and Cys-205 each coordinate [4Fe-4S] cluster. The short motif at 248-251 is the DEAH box element; the sequence is DEGH. In terms of domain architecture, Helicase C-terminal spans 517 to 698; the sequence is HIAEMAAYFR…VFPIEQPAVP (182 aa).

Belongs to the helicase family. DinG subfamily. Type 1 sub-subfamily. It depends on [4Fe-4S] cluster as a cofactor.

The enzyme catalyses Couples ATP hydrolysis with the unwinding of duplex DNA at the replication fork by translocating in the 5'-3' direction. This creates two antiparallel DNA single strands (ssDNA). The leading ssDNA polymer is the template for DNA polymerase III holoenzyme which synthesizes a continuous strand.. It catalyses the reaction ATP + H2O = ADP + phosphate + H(+). DNA-dependent ATPase and 5'-3' DNA helicase. Unwinds D-loops, R-loops, forked DNA and G-quadruplex DNA. The polypeptide is ATP-dependent DNA helicase DinG (Salmonella paratyphi A (strain ATCC 9150 / SARB42)).